Here is a 322-residue protein sequence, read N- to C-terminus: N-acetyl-gamma-glutamyl-phosphate reductase (322 aa).

Residue Cys132 is part of the active site.

It belongs to the NAGSA dehydrogenase family. Type 1 subfamily.

The protein resides in the cytoplasm. The catalysed reaction is N-acetyl-L-glutamate 5-semialdehyde + phosphate + NADP(+) = N-acetyl-L-glutamyl 5-phosphate + NADPH + H(+). Its pathway is amino-acid biosynthesis; L-arginine biosynthesis; N(2)-acetyl-L-ornithine from L-glutamate: step 3/4. Functionally, catalyzes the NADPH-dependent reduction of N-acetyl-5-glutamyl phosphate to yield N-acetyl-L-glutamate 5-semialdehyde. The polypeptide is N-acetyl-gamma-glutamyl-phosphate reductase (Bacteroides thetaiotaomicron (strain ATCC 29148 / DSM 2079 / JCM 5827 / CCUG 10774 / NCTC 10582 / VPI-5482 / E50)).